The chain runs to 456 residues: CBL-interacting protein kinase 9 (456 aa).

Residues 27 to 282 (YELGKTIGEG…IAQILEDDWF (256 aa)) form the Protein kinase domain. ATP contacts are provided by residues 33-41 (IGEGSFAKV) and Lys-56. Asp-150 functions as the Proton acceptor in the catalytic mechanism. Residues 168–197 (DFGLSAFAPQTKEDGLLHTACGTPNYVAPE) are activation loop. The NAF domain occupies 318-343 (REKPESMNAFALISRSQGFNLGNLFE). Residues 351 to 380 (KRETSFTSQCTPQEIMSKIEEACGPLGFNV) are PPI.

This sequence belongs to the protein kinase superfamily. CAMK Ser/Thr protein kinase family. SNF1 subfamily. Requires Mn(2+) as cofactor.

The enzyme catalyses L-seryl-[protein] + ATP = O-phospho-L-seryl-[protein] + ADP + H(+). It carries out the reaction L-threonyl-[protein] + ATP = O-phospho-L-threonyl-[protein] + ADP + H(+). In terms of biological role, CIPK serine-threonine protein kinases interact with CBL proteins. Binding of a CBL protein to the regulatory NAF domain of CIPK protein lead to the activation of the kinase in a calcium-dependent manner. In Oryza sativa subsp. japonica (Rice), this protein is CBL-interacting protein kinase 9 (CIPK9).